Here is a 167-residue protein sequence, read N- to C-terminus: uncharacterized protein (167 aa).

This is an uncharacterized protein from Acanthamoeba polyphaga (Amoeba).